Consider the following 893-residue polypeptide: UPF0182 protein CLB_0018 (893 aa).

Transmembrane regions (helical) follow at residues 9-29, 49-69, 94-114, 154-174, 202-222, 246-266, and 273-293; these read IPLF…NFII, AIII…WMYY, LFFI…SSSY, VIIS…FILE, LAIV…IKIW, FYKI…LSIV, and VSIC…ASFL.

Belongs to the UPF0182 family.

It localises to the cell membrane. This chain is UPF0182 protein CLB_0018, found in Clostridium botulinum (strain ATCC 19397 / Type A).